Consider the following 513-residue polypeptide: ATP synthase subunit alpha (513 aa).

169–176 (GDRQTGKT) provides a ligand contact to ATP.

This sequence belongs to the ATPase alpha/beta chains family. In terms of assembly, F-type ATPases have 2 components, CF(1) - the catalytic core - and CF(0) - the membrane proton channel. CF(1) has five subunits: alpha(3), beta(3), gamma(1), delta(1), epsilon(1). CF(0) has three main subunits: a(1), b(2) and c(9-12). The alpha and beta chains form an alternating ring which encloses part of the gamma chain. CF(1) is attached to CF(0) by a central stalk formed by the gamma and epsilon chains, while a peripheral stalk is formed by the delta and b chains.

The protein localises to the cell inner membrane. The catalysed reaction is ATP + H2O + 4 H(+)(in) = ADP + phosphate + 5 H(+)(out). In terms of biological role, produces ATP from ADP in the presence of a proton gradient across the membrane. The alpha chain is a regulatory subunit. This Vibrio vulnificus (strain CMCP6) protein is ATP synthase subunit alpha.